Reading from the N-terminus, the 97-residue chain is Stefin-1 (97 aa).

A Secondary area of contact motif is present at residues 46–50; sequence QVVAG.

This sequence belongs to the cystatin family.

It is found in the cytoplasm. Functionally, this is an intracellular thiol proteinase inhibitor. This is Stefin-1 (Stfa1) from Mus musculus (Mouse).